Consider the following 106-residue polypeptide: Prothymosin alpha-B (106 aa).

Basic and acidic residues predominate over residues 1–39; that stretch reads MADAKVDSATEISAKDLKEKKLIEEKENGKDATNGKENE. The segment at 1–106 is disordered; that stretch reads MADAKVDSAT…DVDPKKQKVN (106 aa). The residue at position 8 (Ser-8) is a Phosphoserine. Thr-10 is subject to Phosphothreonine. Composition is skewed to acidic residues over residues 40–76 and 85–98; these read ENGE…DEDL and DDDE…EDDV.

Belongs to the pro/parathymosin family. In terms of tissue distribution, uniformly expressed in all embryonic cells at 4 and 8 hpf. At the 20-somite stage (18 hpf), ubiquitously expressed in the developing nervous system, in the tail bud and in the pronephric ducts. Also expressed in some placodes, including the anterior lateral line placode, otic vesicle and olfactory placode. At 27 hpf, strong expression persists in the central nervous system and the olfactory placode. Expressed strongly in the eyes and the pectoral fin buds. In the tail region, expressed in the spinal cord, in the posterior lateral line precursors, and persists in the pronephric ducts. At 48 hpf, expressed in all head territories including the developing brain, eyes, and pharyngeal arches. More caudally, expression persists in the pectoral fin buds, the spinal cord and, for the first time, appears in the intestine. At 72 hpf, expressed only in restricted regions of the brain, in pharyngeal arches region and in the amacrine cells and the horizontal cells of the retina.

The protein resides in the nucleus. The chain is Prothymosin alpha-B from Danio rerio (Zebrafish).